The sequence spans 256 residues: Isoprenyl transferase (256 aa).

Residues 1–22 (MLEKFSKWKGNRSNHTTPSHSL) form a disordered region. Aspartate 36 is a catalytic residue. Aspartate 36 is a Mg(2+) binding site. Substrate-binding positions include 37–40 (GNGR), tryptophan 41, arginine 49, histidine 53, and 81–83 (STE). Residue asparagine 84 is the Proton acceptor of the active site. Substrate-binding positions include tryptophan 85, arginine 87, arginine 204, and 210–212 (RLS). Glutamate 223 contributes to the Mg(2+) binding site.

This sequence belongs to the UPP synthase family. As to quaternary structure, homodimer. Mg(2+) is required as a cofactor.

Catalyzes the condensation of isopentenyl diphosphate (IPP) with allylic pyrophosphates generating different type of terpenoids. The chain is Isoprenyl transferase from Halalkalibacterium halodurans (strain ATCC BAA-125 / DSM 18197 / FERM 7344 / JCM 9153 / C-125) (Bacillus halodurans).